A 287-amino-acid chain; its full sequence is Pyridoxal kinase PdxY (287 aa).

Substrate-binding positions include Ser-10 and 45–46 (TQ). Residues Asp-112, Ala-144, Glu-149, Lys-182, and 209–212 (RPLV) contribute to the ATP site. Asp-224 contributes to the substrate binding site.

It belongs to the pyridoxine kinase family. PdxY subfamily. Homodimer. Mg(2+) is required as a cofactor.

It carries out the reaction pyridoxal + ATP = pyridoxal 5'-phosphate + ADP + H(+). Its pathway is cofactor metabolism; pyridoxal 5'-phosphate salvage; pyridoxal 5'-phosphate from pyridoxal: step 1/1. In terms of biological role, pyridoxal kinase involved in the salvage pathway of pyridoxal 5'-phosphate (PLP). Catalyzes the phosphorylation of pyridoxal to PLP. The protein is Pyridoxal kinase PdxY of Shigella flexneri.